A 44-amino-acid polypeptide reads, in one-letter code: Photosystem I reaction center subunit IX (44 aa).

The helical transmembrane segment at 7 to 27 threads the bilayer; sequence YLSAAPVLSTIWFGALAGLLI.

It belongs to the PsaJ family.

It is found in the plastid. The protein resides in the chloroplast thylakoid membrane. In terms of biological role, may help in the organization of the PsaE and PsaF subunits. This Pelargonium hortorum (Common geranium) protein is Photosystem I reaction center subunit IX.